Reading from the N-terminus, the 362-residue chain is Peptide chain release factor 1 (362 aa).

Gln-237 bears the N5-methylglutamine mark.

The protein belongs to the prokaryotic/mitochondrial release factor family. Post-translationally, methylated by PrmC. Methylation increases the termination efficiency of RF1.

The protein localises to the cytoplasm. Functionally, peptide chain release factor 1 directs the termination of translation in response to the peptide chain termination codons UAG and UAA. This chain is Peptide chain release factor 1, found in Legionella pneumophila (strain Paris).